Reading from the N-terminus, the 680-residue chain is DNA-directed RNA polymerase subunit beta' (680 aa).

Zn(2+) is bound by residues cysteine 69, cysteine 71, cysteine 87, and cysteine 90. Mg(2+) is bound by residues aspartate 489, aspartate 491, and aspartate 493.

The protein belongs to the RNA polymerase beta' chain family. RpoC1 subfamily. In terms of assembly, in plastids the minimal PEP RNA polymerase catalytic core is composed of four subunits: alpha, beta, beta', and beta''. When a (nuclear-encoded) sigma factor is associated with the core the holoenzyme is formed, which can initiate transcription. Requires Mg(2+) as cofactor. The cofactor is Zn(2+).

The protein localises to the plastid. The protein resides in the chloroplast. The enzyme catalyses RNA(n) + a ribonucleoside 5'-triphosphate = RNA(n+1) + diphosphate. Its function is as follows. DNA-dependent RNA polymerase catalyzes the transcription of DNA into RNA using the four ribonucleoside triphosphates as substrates. The protein is DNA-directed RNA polymerase subunit beta' of Lobularia maritima (Sweet alyssum).